The chain runs to 612 residues: Probable serine/threonine-protein kinase WNK4 (612 aa).

Residues 25–282 (IRYNEVLGRG…AKELLQDPFL (258 aa)) enclose the Protein kinase domain. ATP is bound by residues 105–108 (TELF) and lysine 155. Aspartate 172 (proton acceptor) is an active-site residue.

This sequence belongs to the protein kinase superfamily. Ser/Thr protein kinase family. WNK subfamily.

The catalysed reaction is L-seryl-[protein] + ATP = O-phospho-L-seryl-[protein] + ADP + H(+). It carries out the reaction L-threonyl-[protein] + ATP = O-phospho-L-threonyl-[protein] + ADP + H(+). This chain is Probable serine/threonine-protein kinase WNK4 (WNK4), found in Oryza sativa subsp. japonica (Rice).